Consider the following 378-residue polypeptide: Mannitol-1-phosphate 5-dehydrogenase (378 aa).

An NAD(+)-binding site is contributed by 4-15 (SVHFGAGNIGRG).

This sequence belongs to the mannitol dehydrogenase family.

It catalyses the reaction D-mannitol 1-phosphate + NAD(+) = beta-D-fructose 6-phosphate + NADH + H(+). This chain is Mannitol-1-phosphate 5-dehydrogenase, found in Streptococcus pneumoniae (strain ATCC BAA-255 / R6).